The sequence spans 850 residues: Adenylate cyclase (850 aa).

The interval 1 to 535 (MYLYIETLKQ…DISHHFPLRL (535 aa)) is catalytic. The segment at 541–850 (KALYSPCEIR…SLPTKQCQLH (310 aa)) is regulatory.

This sequence belongs to the adenylyl cyclase class-1 family.

The protein resides in the cytoplasm. The enzyme catalyses ATP = 3',5'-cyclic AMP + diphosphate. The regulatory domain is involved in the regulation of cyclase activity by the carbon source. The chain is Adenylate cyclase (cya) from Yersinia pestis.